Here is a 343-residue protein sequence, read N- to C-terminus: Uroporphyrinogen decarboxylase (343 aa).

Substrate contacts are provided by residues 23 to 27 (RQAGR), Asp-73, Tyr-150, Ser-205, and His-322.

It belongs to the uroporphyrinogen decarboxylase family. Homodimer.

The protein localises to the cytoplasm. The catalysed reaction is uroporphyrinogen III + 4 H(+) = coproporphyrinogen III + 4 CO2. It participates in porphyrin-containing compound metabolism; protoporphyrin-IX biosynthesis; coproporphyrinogen-III from 5-aminolevulinate: step 4/4. In terms of biological role, catalyzes the decarboxylation of four acetate groups of uroporphyrinogen-III to yield coproporphyrinogen-III. This is Uroporphyrinogen decarboxylase from Cereibacter sphaeroides (strain KD131 / KCTC 12085) (Rhodobacter sphaeroides).